Consider the following 271-residue polypeptide: Formamidopyrimidine-DNA glycosylase (271 aa).

The Schiff-base intermediate with DNA role is filled by Pro-2. Glu-3 (proton donor) is an active-site residue. The Proton donor; for beta-elimination activity role is filled by Lys-58. The DNA site is built by His-92, Arg-111, and Arg-152. An FPG-type zinc finger spans residues 237–271; it reads FVYGREGEACKQCGRVLKHATIGQRATVWCGSCQR. Arg-261 (proton donor; for delta-elimination activity) is an active-site residue.

The protein belongs to the FPG family. Monomer. Zn(2+) is required as a cofactor.

The catalysed reaction is Hydrolysis of DNA containing ring-opened 7-methylguanine residues, releasing 2,6-diamino-4-hydroxy-5-(N-methyl)formamidopyrimidine.. It carries out the reaction 2'-deoxyribonucleotide-(2'-deoxyribose 5'-phosphate)-2'-deoxyribonucleotide-DNA = a 3'-end 2'-deoxyribonucleotide-(2,3-dehydro-2,3-deoxyribose 5'-phosphate)-DNA + a 5'-end 5'-phospho-2'-deoxyribonucleoside-DNA + H(+). Involved in base excision repair of DNA damaged by oxidation or by mutagenic agents. Acts as a DNA glycosylase that recognizes and removes damaged bases. Has a preference for oxidized purines, such as 7,8-dihydro-8-oxoguanine (8-oxoG). Has AP (apurinic/apyrimidinic) lyase activity and introduces nicks in the DNA strand. Cleaves the DNA backbone by beta-delta elimination to generate a single-strand break at the site of the removed base with both 3'- and 5'-phosphates. This Xanthomonas axonopodis pv. citri (strain 306) protein is Formamidopyrimidine-DNA glycosylase.